Here is a 316-residue protein sequence, read N- to C-terminus: 4-hydroxy-3-methylbut-2-enyl diphosphate reductase (316 aa).

Position 12 (C12) interacts with [4Fe-4S] cluster. The (2E)-4-hydroxy-3-methylbut-2-enyl diphosphate site is built by H43 and H81. Residues H43 and H81 each contribute to the dimethylallyl diphosphate site. Residues H43 and H81 each coordinate isopentenyl diphosphate. C103 provides a ligand contact to [4Fe-4S] cluster. H131 serves as a coordination point for (2E)-4-hydroxy-3-methylbut-2-enyl diphosphate. H131 contributes to the dimethylallyl diphosphate binding site. Residue H131 participates in isopentenyl diphosphate binding. The active-site Proton donor is the E133. T170 is a binding site for (2E)-4-hydroxy-3-methylbut-2-enyl diphosphate. C198 provides a ligand contact to [4Fe-4S] cluster. Residues S226, N228, and S271 each coordinate (2E)-4-hydroxy-3-methylbut-2-enyl diphosphate. Residues S226, N228, and S271 each contribute to the dimethylallyl diphosphate site. Positions 226, 228, and 271 each coordinate isopentenyl diphosphate.

It belongs to the IspH family. It depends on [4Fe-4S] cluster as a cofactor.

It carries out the reaction isopentenyl diphosphate + 2 oxidized [2Fe-2S]-[ferredoxin] + H2O = (2E)-4-hydroxy-3-methylbut-2-enyl diphosphate + 2 reduced [2Fe-2S]-[ferredoxin] + 2 H(+). It catalyses the reaction dimethylallyl diphosphate + 2 oxidized [2Fe-2S]-[ferredoxin] + H2O = (2E)-4-hydroxy-3-methylbut-2-enyl diphosphate + 2 reduced [2Fe-2S]-[ferredoxin] + 2 H(+). The protein operates within isoprenoid biosynthesis; dimethylallyl diphosphate biosynthesis; dimethylallyl diphosphate from (2E)-4-hydroxy-3-methylbutenyl diphosphate: step 1/1. Its pathway is isoprenoid biosynthesis; isopentenyl diphosphate biosynthesis via DXP pathway; isopentenyl diphosphate from 1-deoxy-D-xylulose 5-phosphate: step 6/6. Catalyzes the conversion of 1-hydroxy-2-methyl-2-(E)-butenyl 4-diphosphate (HMBPP) into a mixture of isopentenyl diphosphate (IPP) and dimethylallyl diphosphate (DMAPP). Acts in the terminal step of the DOXP/MEP pathway for isoprenoid precursor biosynthesis. The sequence is that of 4-hydroxy-3-methylbut-2-enyl diphosphate reductase from Bacillus cereus (strain AH820).